The chain runs to 146 residues: MHPAHLLVLLAVCVSLLGASDIPPLPLNLAQFGFMIRCANGGSRSPLDYTDYGCYCGKGGRGTPVDDLDRCCQVHDECYGEAEKRLGCSPFVTLYSWKCYGKAPSCNTKTDCQRFVCNCDAKAAECFARSPYQKKNWNINTKARCK.

The signal sequence occupies residues M1–L27. 7 cysteine pairs are disulfide-bonded: C38–C99, C54–C145, C56–C72, C71–C126, C78–C119, C88–C112, and C106–C117. 3 residues coordinate Ca(2+): Y55, G57, and G59. H75 is an active-site residue. Residue D76 coordinates Ca(2+). The active site involves D120.

The protein belongs to the phospholipase A2 family. Group I subfamily. D49 sub-subfamily. In terms of assembly, monomer. Requires Ca(2+) as cofactor. Expressed by the venom gland.

It localises to the secreted. It catalyses the reaction a 1,2-diacyl-sn-glycero-3-phosphocholine + H2O = a 1-acyl-sn-glycero-3-phosphocholine + a fatty acid + H(+). Snake venom phospholipase A2 (PLA2) that shows high presynaptic neurotoxicity in vertebrata that is independent of catalytic activity, as well as local myotoxicity when intramuscularly injected into mice. Blocks acetylcholine release in Aplysia neurons, and potentiates pro-inflammatory cellular signaling. Potentiates glutamate excitoxicity when coinjected into brain of rats. May act by binding in a calcium-dependent fashion and with high affinity to a neuronal-type (N-type) PLA2 receptor, and with very high affinity to a muscle-type (M-type) PLA2 receptor. In vitro, shows a high-specific activity on E.coli membranes and is more efficient on the anionic phospholipid POPG than on the anionic phospholipid POPS or the zwitterionic phospholipid POPC. Exerts catalytically-independent anti-HIV (IC(50) is 35 nM) activity and catalytically-dependent antimalarial activity (IC(50) is 3.1 nM when tested on P.falciparum grown in serum that contains lipoproteins). PLA2 catalyzes the calcium-dependent hydrolysis of the 2-acyl groups in 3-sn-phosphoglycerides. The protein is Phospholipase A2 OS2 of Oxyuranus scutellatus scutellatus (Australian taipan).